We begin with the raw amino-acid sequence, 101 residues long: Small ribosomal subunit protein uS14A (101 aa).

A disordered region spans residues 31 to 73 (IKSPSTTPEARVAAQSELNRQPRDASPVRVRNRDSVDGRPRGH). Basic and acidic residues predominate over residues 61–70 (RNRDSVDGRP).

Belongs to the universal ribosomal protein uS14 family. As to quaternary structure, part of the 30S ribosomal subunit. Contacts proteins S3 and S10.

Binds 16S rRNA, required for the assembly of 30S particles and may also be responsible for determining the conformation of the 16S rRNA at the A site. This Mycolicibacterium vanbaalenii (strain DSM 7251 / JCM 13017 / BCRC 16820 / KCTC 9966 / NRRL B-24157 / PYR-1) (Mycobacterium vanbaalenii) protein is Small ribosomal subunit protein uS14A.